The primary structure comprises 158 residues: NAD(P)H-quinone oxidoreductase subunit J, chloroplastic (158 aa).

The protein belongs to the complex I 30 kDa subunit family. As to quaternary structure, NDH is composed of at least 16 different subunits, 5 of which are encoded in the nucleus.

The protein localises to the plastid. The protein resides in the chloroplast thylakoid membrane. It carries out the reaction a plastoquinone + NADH + (n+1) H(+)(in) = a plastoquinol + NAD(+) + n H(+)(out). It catalyses the reaction a plastoquinone + NADPH + (n+1) H(+)(in) = a plastoquinol + NADP(+) + n H(+)(out). NDH shuttles electrons from NAD(P)H:plastoquinone, via FMN and iron-sulfur (Fe-S) centers, to quinones in the photosynthetic chain and possibly in a chloroplast respiratory chain. The immediate electron acceptor for the enzyme in this species is believed to be plastoquinone. Couples the redox reaction to proton translocation, and thus conserves the redox energy in a proton gradient. This chain is NAD(P)H-quinone oxidoreductase subunit J, chloroplastic, found in Citrus sinensis (Sweet orange).